A 496-amino-acid polypeptide reads, in one-letter code: UDP-N-acetylmuramoyl-L-alanyl-D-glutamate--2,6-diaminopimelate ligase (496 aa).

A UDP-N-acetyl-alpha-D-muramoyl-L-alanyl-D-glutamate-binding site is contributed by Ser-32. 116 to 122 (GTNGKTT) is an ATP binding site. UDP-N-acetyl-alpha-D-muramoyl-L-alanyl-D-glutamate contacts are provided by residues 158 to 159 (TT), Ser-185, Gln-191, and Arg-193. At Lys-225 the chain carries N6-carboxylysine. Meso-2,6-diaminopimelate contacts are provided by residues Arg-389, 413–416 (DNPR), Gly-464, and Glu-468. The Meso-diaminopimelate recognition motif motif lies at 413-416 (DNPR).

The protein belongs to the MurCDEF family. MurE subfamily. The cofactor is Mg(2+). Carboxylation is probably crucial for Mg(2+) binding and, consequently, for the gamma-phosphate positioning of ATP.

Its subcellular location is the cytoplasm. It carries out the reaction UDP-N-acetyl-alpha-D-muramoyl-L-alanyl-D-glutamate + meso-2,6-diaminopimelate + ATP = UDP-N-acetyl-alpha-D-muramoyl-L-alanyl-gamma-D-glutamyl-meso-2,6-diaminopimelate + ADP + phosphate + H(+). Its pathway is cell wall biogenesis; peptidoglycan biosynthesis. Its function is as follows. Catalyzes the addition of meso-diaminopimelic acid to the nucleotide precursor UDP-N-acetylmuramoyl-L-alanyl-D-glutamate (UMAG) in the biosynthesis of bacterial cell-wall peptidoglycan. This is UDP-N-acetylmuramoyl-L-alanyl-D-glutamate--2,6-diaminopimelate ligase from Nostoc sp. (strain PCC 7120 / SAG 25.82 / UTEX 2576).